Reading from the N-terminus, the 72-residue chain is Translation initiation factor IF-1 (72 aa).

In terms of domain architecture, S1-like spans 1–72 (MTKEEAIEVD…SRGRIMFRER (72 aa)).

It belongs to the IF-1 family. Component of the 30S ribosomal translation pre-initiation complex which assembles on the 30S ribosome in the order IF-2 and IF-3, IF-1 and N-formylmethionyl-tRNA(fMet); mRNA recruitment can occur at any time during PIC assembly.

It localises to the cytoplasm. Functionally, one of the essential components for the initiation of protein synthesis. Stabilizes the binding of IF-2 and IF-3 on the 30S subunit to which N-formylmethionyl-tRNA(fMet) subsequently binds. Helps modulate mRNA selection, yielding the 30S pre-initiation complex (PIC). Upon addition of the 50S ribosomal subunit IF-1, IF-2 and IF-3 are released leaving the mature 70S translation initiation complex. This chain is Translation initiation factor IF-1, found in Treponema pallidum (strain Nichols).